Reading from the N-terminus, the 166-residue chain is MTEGRNKEELEDITLLGNQNNKYDFDYRPDVLESFDNKHQGRDYFVKFNCPEFTSLCPITGQPDFATIYISYIPNIKMVESKSLKLYLFSFRNHGDFHEDCMNIIMNDLIELMDPHYIEVWGKFTPRGGISIDPYTNYGRPDSKYEKMAEHRLMNHDLYPEKIDNR.

C57 serves as the catalytic Thioimide intermediate. The Proton donor role is filled by D64. Substrate-binding positions include 79 to 81 (VES) and 98 to 99 (HE).

It belongs to the GTP cyclohydrolase I family. QueF type 1 subfamily.

It localises to the cytoplasm. It carries out the reaction 7-aminomethyl-7-carbaguanine + 2 NADP(+) = 7-cyano-7-deazaguanine + 2 NADPH + 3 H(+). Its pathway is tRNA modification; tRNA-queuosine biosynthesis. Catalyzes the NADPH-dependent reduction of 7-cyano-7-deazaguanine (preQ0) to 7-aminomethyl-7-deazaguanine (preQ1). This is NADPH-dependent 7-cyano-7-deazaguanine reductase from Staphylococcus saprophyticus subsp. saprophyticus (strain ATCC 15305 / DSM 20229 / NCIMB 8711 / NCTC 7292 / S-41).